The primary structure comprises 354 residues: Tribbles homolog 3 (354 aa).

The tract at residues 1–127 is interaction with DDIT3/CHOP; it reads MRATPLAASA…QHVARPTEVL (127 aa). The tract at residues 36–61 is disordered; sequence RDEPEPGPLPSLLPPSPPPASDLSPA. The segment covering 41–55 has biased composition (pro residues); sequence PGPLPSLLPPSPPPA. The Protein kinase domain maps to 68 to 315; that stretch reads LGPYILLERE…ALGILLHPWL (248 aa). Positions 320 to 333 are enriched in basic and acidic residues; the sequence is GRVSPPQSDRREMD. The interval 320 to 354 is disordered; it reads GRVSPPQSDRREMDQVVPDGPQLEEAEEGEVGLYG. Residues 341-354 are compositionally biased toward acidic residues; it reads QLEEAEEGEVGLYG.

It belongs to the protein kinase superfamily. CAMK Ser/Thr protein kinase family. Tribbles subfamily. As to quaternary structure, interacts with AKT1, AKT2, MAP2K1 and MAP2K7. Interacts with ATF4. Interacts with DDIT3/CHOP and inhibits its interaction with EP300/P300. Interacts with APOBEC3C. Interacts (via N-terminus) with APOBEC3A. Interacts with RELA. As to expression, highly expressed in liver. Not detected in heart, brain, spleen, lung, skeletal muscle, kidney or testis.

The protein resides in the nucleus. Inactive protein kinase which acts as a regulator of the integrated stress response (ISR), a process for adaptation to various stress. Inhibits the transcriptional activity of DDIT3/CHOP and is involved in DDIT3/CHOP-dependent cell death during ER stress. May play a role in programmed neuronal cell death but does not appear to affect non-neuronal cells. Acts as a negative feedback regulator of the ATF4-dependent transcription during the ISR: while TRIB3 expression is promoted by ATF4, TRIB3 protein interacts with ATF4 and inhibits ATF4 transcription activity. Disrupts insulin signaling by binding directly to Akt kinases and blocking their activation. May bind directly to and mask the 'Thr-308' phosphorylation site in AKT1. Interacts with the NF-kappa-B transactivator p65 RELA and inhibits its phosphorylation and thus its transcriptional activation activity. Interacts with MAPK kinases and regulates activation of MAP kinases. Can inhibit APOBEC3A editing of nuclear DNA. This Mus musculus (Mouse) protein is Tribbles homolog 3 (Trib3).